We begin with the raw amino-acid sequence, 372 residues long: MKYDLIIIGSGSVGAAAGYYATRAGLKVLMTDAHMPPHQQGSHHGDTRLIRHAYGEGEKYVPLVLRAQTLWDELSTHNEEPIFVRSGVVNLGPADSAFLANVARSAQQWQLNVERLDATALMTRWPEIRVPDNYIGLFEADSGFLRSELAITTWLRLAREAGCAQLFNSPVSHIHHDDNGVTIETSEGCYHASKALISAGTWVKALVPELPVQPVRKVFAWFKADGRYSTKNRFPAFTGEMPNGDQYYGFPAENDELKIGKHNGGQLIQAPEERKPFAAVASDGAEAFPFLRNVLPGIGGCLHGAACTYDNSPDEDFIIDTLPGHENTLVITGLSGHGFKFAPVLGEIAADFALGKTPSFDLTPFRLSRFSQ.

Residue 4–34 (DLIIIGSGSVGAAAGYYATRAGLKVLMTDAH) coordinates FAD. Position 307 is an S-8alpha-FAD cysteine (Cys-307).

Belongs to the MSOX/MTOX family. MTOX subfamily. In terms of assembly, monomer. Requires FAD as cofactor.

It catalyses the reaction N(alpha)-methyl-L-tryptophan + O2 + H2O = L-tryptophan + formaldehyde + H2O2. Catalyzes the oxidative demethylation of N-methyl-L-tryptophan. This chain is N-methyl-L-tryptophan oxidase, found in Salmonella typhimurium (strain LT2 / SGSC1412 / ATCC 700720).